Reading from the N-terminus, the 98-residue chain is Cell division protein FtsB (98 aa).

The Cytoplasmic portion of the chain corresponds to Met-1–Arg-3. Residues Leu-4–Leu-21 traverse the membrane as a helical segment. Topologically, residues Gly-22 to Asn-98 are periplasmic. A coiled-coil region spans residues His-31 to Glu-74.

It belongs to the FtsB family. Part of a complex composed of FtsB, FtsL and FtsQ.

The protein resides in the cell inner membrane. In terms of biological role, essential cell division protein. May link together the upstream cell division proteins, which are predominantly cytoplasmic, with the downstream cell division proteins, which are predominantly periplasmic. This Shewanella pealeana (strain ATCC 700345 / ANG-SQ1) protein is Cell division protein FtsB.